We begin with the raw amino-acid sequence, 473 residues long: Serine palmitoyltransferase 1 (473 aa).

Over 1–15 the chain is Lumenal; the sequence is MATVAEQWVLVEMVQ. Residues 1–66 form an interaction with SPTLC2 region; sequence MATVAEQWVL…KEELIEEWQP (66 aa). Residues 16–36 traverse the membrane as a helical segment; that stretch reads ALYEAPAYHLILEGILILWII. Residues 37–473 lie on the Cytoplasmic side of the membrane; sequence RLVFSKTYKL…IREAAQAVLL (437 aa). The residue at position 164 (Y164) is a Phosphotyrosine; by ABL.

It belongs to the class-II pyridoxal-phosphate-dependent aminotransferase family. Component of the serine palmitoyltransferase (SPT) complex, which is also composed of SPTLC2 or SPTLC3 and SPTSSA or SPTSSB. The heterodimer with SPTLC2 or SPTLC3 forms the catalytic core of the enzyme, while SPTSSA or SPTSSB subunits determine substrate specificity. SPT also interacts with ORMDL proteins, especially ORMDL3, which negatively regulate SPT activity in the presence of ceramides. Forms dimers of heterodimers with SPTLC2. Interacts with RTN4 (isoform B). It depends on pyridoxal 5'-phosphate as a cofactor. Phosphorylation at Tyr-164 inhibits activity and promotes cell survival. As to expression, expressed in astrocytes.

The protein localises to the endoplasmic reticulum membrane. The catalysed reaction is L-serine + hexadecanoyl-CoA + H(+) = 3-oxosphinganine + CO2 + CoA. It catalyses the reaction octadecanoyl-CoA + L-serine + H(+) = 3-oxoeicosasphinganine + CO2 + CoA. The enzyme catalyses tetradecanoyl-CoA + L-serine + H(+) = 3-oxohexadecasphinganine + CO2 + CoA. It carries out the reaction dodecanoyl-CoA + L-serine + H(+) = 3-oxotetradecasphinganine + CO2 + CoA. It participates in lipid metabolism; sphingolipid metabolism. SPT complex catalytic activity is negatively regulated by ORMDL proteins, including ORMDL3, in the presence of ceramides. This mechanism allows to maintain ceramide levels at sufficient concentrations for the production of complex sphingolipids, but which prevents the accumulation of ceramides to levels that trigger apoptosis. Its function is as follows. Component of the serine palmitoyltransferase multisubunit enzyme (SPT) that catalyzes the initial and rate-limiting step in sphingolipid biosynthesis by condensing L-serine and activated acyl-CoA (most commonly palmitoyl-CoA) to form long-chain bases. The SPT complex is also composed of SPTLC2 or SPTLC3 and SPTSSA or SPTSSB. Within this complex, the heterodimer with SPTLC2 or SPTLC3 forms the catalytic core. The composition of the serine palmitoyltransferase (SPT) complex determines the substrate preference. The SPTLC1-SPTLC2-SPTSSA complex shows a strong preference for C16-CoA substrate, while the SPTLC1-SPTLC3-SPTSSA isozyme uses both C14-CoA and C16-CoA as substrates, with a slight preference for C14-CoA. The SPTLC1-SPTLC2-SPTSSB complex shows a strong preference for C18-CoA substrate, while the SPTLC1-SPTLC3-SPTSSB isozyme displays an ability to use a broader range of acyl-CoAs, without apparent preference. Required for adipocyte cell viability and metabolic homeostasis. The protein is Serine palmitoyltransferase 1 of Rattus norvegicus (Rat).